We begin with the raw amino-acid sequence, 346 residues long: ATP-dependent 6-phosphofructokinase (346 aa).

Residues glycine 13, 76 to 77 (RL), and 106 to 109 (GEGT) contribute to the ATP site. Glutamate 107 lines the Mg(2+) pocket. Substrate is bound by residues 129–131 (TID), arginine 166, 173–175 (MGR), glutamate 226, arginine 270, and 276–279 (HIQR). The active-site Proton acceptor is aspartate 131.

The protein belongs to the phosphofructokinase type A (PFKA) family. Mixed-substrate PFK group III subfamily. Homodimer or homotetramer. It depends on Mg(2+) as a cofactor.

It localises to the cytoplasm. The enzyme catalyses beta-D-fructose 6-phosphate + ATP = beta-D-fructose 1,6-bisphosphate + ADP + H(+). The protein operates within carbohydrate degradation; glycolysis; D-glyceraldehyde 3-phosphate and glycerone phosphate from D-glucose: step 3/4. Functionally, catalyzes the phosphorylation of D-fructose 6-phosphate to fructose 1,6-bisphosphate by ATP, the first committing step of glycolysis. The protein is ATP-dependent 6-phosphofructokinase of Corynebacterium efficiens (strain DSM 44549 / YS-314 / AJ 12310 / JCM 11189 / NBRC 100395).